The following is a 477-amino-acid chain: Ribulose bisphosphate carboxylase large chain (477 aa).

Positions 1–2 are excised as a propeptide; sequence MS. At P3 the chain carries N-acetylproline. Residue K14 is modified to N6,N6,N6-trimethyllysine. Residues N123 and T173 each contribute to the substrate site. K175 serves as the catalytic Proton acceptor. K177 lines the substrate pocket. 3 residues coordinate Mg(2+): K201, D203, and E204. K201 carries the post-translational modification N6-carboxylysine. H294 acts as the Proton acceptor in catalysis. Substrate-binding residues include R295, H327, and S379.

The protein belongs to the RuBisCO large chain family. Type I subfamily. In terms of assembly, heterohexadecamer of 8 large chains and 8 small chains; disulfide-linked. The disulfide link is formed within the large subunit homodimers. Mg(2+) is required as a cofactor. Post-translationally, the disulfide bond which can form in the large chain dimeric partners within the hexadecamer appears to be associated with oxidative stress and protein turnover.

Its subcellular location is the plastid. The protein localises to the chloroplast. The enzyme catalyses 2 (2R)-3-phosphoglycerate + 2 H(+) = D-ribulose 1,5-bisphosphate + CO2 + H2O. It catalyses the reaction D-ribulose 1,5-bisphosphate + O2 = 2-phosphoglycolate + (2R)-3-phosphoglycerate + 2 H(+). Its function is as follows. RuBisCO catalyzes two reactions: the carboxylation of D-ribulose 1,5-bisphosphate, the primary event in carbon dioxide fixation, as well as the oxidative fragmentation of the pentose substrate in the photorespiration process. Both reactions occur simultaneously and in competition at the same active site. The protein is Ribulose bisphosphate carboxylase large chain of Nicotiana tomentosiformis (Tobacco).